Here is a 465-residue protein sequence, read N- to C-terminus: Lactaldehyde dehydrogenase (465 aa).

220 to 225 (GSVEIG) is an NAD(+) binding site. Residues glutamate 240 and cysteine 274 contribute to the active site.

Belongs to the aldehyde dehydrogenase family. Homotetramer.

It catalyses the reaction (S)-lactaldehyde + NAD(+) + H2O = (S)-lactate + NADH + 2 H(+). The protein operates within cofactor biosynthesis; coenzyme F420 biosynthesis. Involved in F420 biosynthesis through the oxidation of lactaldehyde to lactate. The chain is Lactaldehyde dehydrogenase from Methanococcus maripaludis (strain C7 / ATCC BAA-1331).